We begin with the raw amino-acid sequence, 498 residues long: MGRKKIQITRIMDERNRQVTFTKRKFGLMKKAYELSVLCDCEIALIIFNSSNKLFQYASTDMDKVLLKYTEYNEPHESRTNSDIVETLRKKGLNGCESPDADDYFEHSPLSEDRFSKLNEDSDFIFKRGPPGLPPQNFSMSVTVPVTSPNALSYTNPGSSLVSPSLAASSTLADSSMLSPPPATLHRNVSPGAPQRPPSTGSASGMLSTTDLTVPNGAGNSPVGNGFVNSRASPNLIGNTGANSLGKVMPTKSPPPPGGGSLGMNSRKPDLRVVIPPSSKGMMPPLSEEEELELNAQRISSSQATQPLATPVVSVTTPSLPPQGLVYSAMPTAYNTDYSLTSADLSALQGFTSPGMLSLGQASAWQQHHLGQAALSSLVAGGQLSQGSNLSINTNQNINIKSEPISPPRDRMTPSGFQQQQQQPQQQPPPQPPQPQPRQEMGRSPVDSLSSSSSSYDGSDREDPRGDFHSPIVLGRPPNTEDRESPSVKRMRMDTWVT.

Residues 3–57 form the MADS-box domain; the sequence is RKKIQITRIMDERNRQVTFTKRKFGLMKKAYELSVLCDCEIALIIFNSSNKLFQY. The mef2-type DNA-binding region spans 58–86; sequence ASTDMDKVLLKYTEYNEPHESRTNSDIVE. Ser59 is modified (phosphoserine; by CK2). Phosphoserine occurs at positions 98 and 108. Phosphothreonine is present on Ser108. Positions 172-220 are disordered; it reads LADSSMLSPPPATLHRNVSPGAPQRPPSTGSASGMLSTTDLTVPNGAGN. Over residues 198-220 the composition is skewed to polar residues; that stretch reads PSTGSASGMLSTTDLTVPNGAGN. Ser233 carries the phosphoserine modification. The disordered stretch occupies residues 240–268; it reads TGANSLGKVMPTKSPPPPGGGSLGMNSRK. Position 247 is an N6-acetyllysine (Lys247). Ser253 carries the post-translational modification Phosphoserine. A required for interaction with MAPKs region spans residues 264–281; that stretch reads MNSRKPDLRVVIPPSSKG. Residues 287–294 are beta domain; sequence SEEEELEL. A phosphothreonine; by MAPK7 mark is found at Thr310 and Thr317. Thr310 bears the Phosphothreonine; by NLK mark. The residue at position 353 (Ser353) is a Phosphoserine; by MAPK7. Polar residues predominate over residues 388-400; sequence SNLSINTNQNINI. A disordered region spans residues 388–498; sequence SNLSINTNQN…KRMRMDTWVT (111 aa). Residue Lys401 is modified to N6-acetyllysine; alternate. Lys401 participates in a covalent cross-link: Glycyl lysine isopeptide (Lys-Gly) (interchain with G-Cter in SUMO); alternate. Ser406 is modified (phosphoserine). Phosphothreonine is present on Thr413. Positions 426–436 are enriched in pro residues; it reads QQPPPQPPQPQ. Residue Ser444 is modified to Phosphoserine. A compositionally biased stretch (low complexity) spans 444–457; sequence SPVDSLSSSSSSYD. 2 stretches are compositionally biased toward basic and acidic residues: residues 458–468 and 479–498; these read GSDREDPRGDF and NTED…TWVT.

It belongs to the MEF2 family. Binds DNA as a homo- or heterodimer. Dimerizes with MEF2D. Interacts with HDAC7. Interacts with PIAS1; the interaction enhances sumoylation. Interacts with HDAC4, HDAC9 and SLC2A4RG. Interacts (via the N-terminal) with MAPK7; the interaction results in the phosphorylation and transcriptional activity of MEF2A. Constitutive phosphorylation on Ser-406 promotes Lys-401 sumoylation thus preventing acetylation at this site. Dephosphorylation on Ser-406 by PPP3CA upon neuron depolarization promotes a switch from sumoylation to acetylation on residue Lys-403 leading to inhibition of dendrite claw differentiation. Phosphorylation on Thr-312 and Thr-319 are the main sites involved in p38 MAPK signaling and activate transcription. Phosphorylated on these sites by MAPK14/p38alpha and MAPK11/p38beta, but not by MAPK13/p38delta nor by MAPK12/p38gamma. Phosphorylation on Ser-408 by CDK5 induced by neurotoxicity inhibits MEF2A transcriptional activation leading to apoptosis of cortical neurons. Phosphorylation on Thr-312, Thr-319 and Ser-355 can be induced by EGF. Isoform 3 is phosphorylated on Ser-98 and Thr-108. In terms of processing, sumoylation on Lys-401 is enhanced by PIAS1 and represses transcriptional activity. Phosphorylation on Ser-406 is required for sumoylation. Has no effect on nuclear location nor on DNA binding. Sumoylated with SUMO1 and, to a lesser extent with SUMO2 and SUMO3. PIASx facilitates sumoylation in postsynaptic dendrites in the cerebellar cortex and promotes their morphogenesis. Post-translationally, acetylation on Lys-401 activates transcriptional activity. Acetylated by p300 on several sites in diffentiating myocytes. Acetylation on Lys-4 increases DNA binding and transactivation. Hyperacetylation by p300 leads to enhanced cardiac myocyte growth and heart failure. Proteolytically cleaved in cerebellar granule neurons on several sites by caspase 3 and caspase 7 following neurotoxicity. Preferentially cleaves the CDK5-mediated hyperphosphorylated form which leads to neuron apoptosis and transcriptional inactivation. In terms of tissue distribution, widely expressed though mainly restricted to skeletal and cardiac muscle, brain, neurons and lymphocytes. Differentially expressed depending on if isoforms contain the beta domain or not, with the total expression of the beta domain-lacking isoforms vastly exceeding that of the beta domain-containing isoforms. Isoforms containing the beta domain are expressed primarily in skeletal and cardiac muscle and in brain. Also present in lung and testis. Splicing to include the beta domain is induced in differentiating myocytes. Isoforms lacking the beta domain are expressed less abundantly in skeletal muscle, brain and lymphocytes, and are uniquely found in ovary, liver, spleen and kidney. In embryos, the beta domain-containing and beta domain-lacking isoforms are equally expressed. Also expressed cerebellar granule neurons and other regions of the CNS. Highest levels in the olfactory bulb, cortex, hippocampus, thalamus and cerebellum.

The protein localises to the nucleus. Its function is as follows. Transcriptional activator which binds specifically to the MEF2 element, 5'-YTA[AT](4)TAR-3', found in numerous muscle-specific genes. Also involved in the activation of numerous growth factor- and stress-induced genes. Mediates cellular functions not only in skeletal and cardiac muscle development, but also in neuronal differentiation and survival. Plays diverse roles in the control of cell growth, survival and apoptosis via p38 MAPK signaling in muscle-specific and/or growth factor-related transcription. In cerebellar granule neurons, phosphorylated and sumoylated MEF2A represses transcription of NUR77 promoting synaptic differentiation. Associates with chromatin to the ZNF16 promoter. The chain is Myocyte-specific enhancer factor 2A (Mef2a) from Mus musculus (Mouse).